Here is a 178-residue protein sequence, read N- to C-terminus: 6,7-dimethyl-8-ribityllumazine synthase (178 aa).

Residues Phe23, 61-63, and 85-87 contribute to the 5-amino-6-(D-ribitylamino)uracil site; these read SFE and AVI. A (2S)-2-hydroxy-3-oxobutyl phosphate-binding site is contributed by 90–91; sequence QT. The Proton donor role is filled by His93. Tyr118 contacts 5-amino-6-(D-ribitylamino)uracil. Arg132 serves as a coordination point for (2S)-2-hydroxy-3-oxobutyl phosphate.

Belongs to the DMRL synthase family.

It catalyses the reaction (2S)-2-hydroxy-3-oxobutyl phosphate + 5-amino-6-(D-ribitylamino)uracil = 6,7-dimethyl-8-(1-D-ribityl)lumazine + phosphate + 2 H2O + H(+). Its pathway is cofactor biosynthesis; riboflavin biosynthesis; riboflavin from 2-hydroxy-3-oxobutyl phosphate and 5-amino-6-(D-ribitylamino)uracil: step 1/2. Its function is as follows. Catalyzes the formation of 6,7-dimethyl-8-ribityllumazine by condensation of 5-amino-6-(D-ribitylamino)uracil with 3,4-dihydroxy-2-butanone 4-phosphate. This is the penultimate step in the biosynthesis of riboflavin. In Thermosynechococcus vestitus (strain NIES-2133 / IAM M-273 / BP-1), this protein is 6,7-dimethyl-8-ribityllumazine synthase.